Here is a 160-residue protein sequence, read N- to C-terminus: MPSFDIVSEIDTSELQNAVDNANRELATRFDFRGVKASLSITNDVAKLSAEHDSQLRQLMDLLRTNLIKRGVDSRAMDPETPNHTGKTWTQVIKFKEGVDQPTSKKLIKLIKDNKMKVQVAVQGEQLRVTGKKRDDLQAVMTLIKGTELDQAFQFNNFRD.

It belongs to the YajQ family.

Its function is as follows. Nucleotide-binding protein. The chain is Nucleotide-binding protein Ping_2261 from Psychromonas ingrahamii (strain DSM 17664 / CCUG 51855 / 37).